A 316-amino-acid polypeptide reads, in one-letter code: Olfactory receptor 56B2 (316 aa).

Topologically, residues 1-32 are extracellular; it reads MVLQELRDSNSSKFQVSEFILMGFPGIHSWQH. Asparagine 10 carries an N-linked (GlcNAc...) asparagine glycan. The chain crosses the membrane as a helical span at residues 33-53; it reads WLSLPLALLYLLALSANILIL. Topologically, residues 54–61 are cytoplasmic; sequence IIINKEAA. A helical transmembrane segment spans residues 62–82; it reads LHQPMYYFLGILAMADIGLAT. The Extracellular segment spans residues 83 to 106; that stretch reads TIMPKILAILWFNAKTISLLECFA. Cysteines 104 and 196 form a disulfide. A helical membrane pass occupies residues 107–127; the sequence is QMYAIHCFVAMESSTFVCMAI. At 128 to 146 the chain is on the cytoplasmic side; that stretch reads DRYVAICRPLRYPSIITES. The helical transmembrane segment at 147–167 threads the bilayer; that stretch reads FVFKANGFMALRNSLCLISVP. At 168-203 the chain is on the extracellular side; the sequence is LLAAQRHYCSQNQIEHCLCSNLGVTSLSCDDRRINS. The helical transmembrane segment at 204–224 threads the bilayer; the sequence is INQVLLAWTLMGSDLGLIILS. Topologically, residues 225–244 are cytoplasmic; it reads YALILYSVLKLNSPEAASKA. Residues 245 to 265 traverse the membrane as a helical segment; that stretch reads LSTCTSHLILILFFYTVIIVI. Over 266 to 279 the chain is Extracellular; sequence SITRSTGMRVPLIP. A helical membrane pass occupies residues 280–300; that stretch reads VLLNVLHNVIPPALNPMVYAL. The Cytoplasmic segment spans residues 301–316; it reads KNKELRQGLYKVLRLE.

The protein belongs to the G-protein coupled receptor 1 family.

The protein localises to the cell membrane. Its function is as follows. Odorant receptor. The chain is Olfactory receptor 56B2 from Homo sapiens (Human).